The primary structure comprises 151 residues: Arginine regulator (151 aa).

It belongs to the ArgR family.

The protein resides in the cytoplasm. It functions in the pathway amino-acid degradation; L-arginine degradation via ADI pathway. Regulates the transcription of the arc operon, involved in arginine catabolism. The sequence is that of Arginine regulator (argR1) from Clostridium perfringens (strain 13 / Type A).